Reading from the N-terminus, the 201-residue chain is Homeobox protein goosecoid-2 (201 aa).

Disordered regions lie at residues 1-55, 95-124, and 179-201; these read MATA…PEAP, PATPSPLTAPRAGSPALTGTSGPGPQRRTR, and RHQKRASSSRLLPGTKKTPKESC. Over residues 95 to 106 the composition is skewed to low complexity; sequence PATPSPLTAPRA. The homeobox DNA-binding region spans 123–182; sequence TRRHRTIFSEEQLQALEALFVQNQYPDVGTRERLAVRIRLREERVEVWFKNRRAKWRHQK.

It belongs to the paired homeobox family. Bicoid subfamily. As to expression, expressed in adult testis.

The protein resides in the nucleus. Functionally, may have a role in development. May regulate its own transcription. May bind the bicoid consensus sequence TAATCC. The protein is Homeobox protein goosecoid-2 (Gsc2) of Mus musculus (Mouse).